A 669-amino-acid chain; its full sequence is Trifunctional UDP-glucose 4,6-dehydratase/UDP-4-keto-6-deoxy-D-glucose 3,5-epimerase/UDP-4-keto-L-rhamnose-reductase RHM1 (669 aa).

Residue 13–19 (GAAGFIA) coordinates NAD(+). T132 contributes to the substrate binding site. D133 acts as the Proton donor in catalysis. Catalysis depends on proton acceptor residues E134 and Y159. 391-397 (GKTGWIG) is an NADP(+) binding site.

In the N-terminal section; belongs to the NAD(P)-dependent epimerase/dehydratase family. dTDP-glucose dehydratase subfamily. This sequence in the C-terminal section; belongs to the dTDP-4-dehydrorhamnose reductase family. It depends on NAD(+) as a cofactor. NADP(+) is required as a cofactor. As to expression, expressed in roots, stems, leaves, seedlings, inflorescence tips, and siliques. Detected in the adaxial side of cotyledons, in the emerging leaves and in trichomes. Also detected in the root tip, more precisely in the epidermal cells in the meristematic and elongation zone.

The protein resides in the cytoplasm. It localises to the cytosol. The enzyme catalyses UDP-alpha-D-glucose = UDP-4-dehydro-6-deoxy-alpha-D-glucose + H2O. It participates in carbohydrate biosynthesis. Its function is as follows. Trifunctional enzyme involved in UDP-beta-L-rhamnose biosynthesis, a precursor of the primary cell wall components rhamnogalacturonan I (RG-I) and rhamnogalacturonan II (RG-II). Plays a major role in supplying UDP-rhamnose for flavonol biosynthesis. Catalyzes the dehydration of UDP-glucose to form UDP-4-dehydro-6-deoxy-D-glucose followed by the epimerization of the C3' and C5' positions of UDP-4-dehydro-6-deoxy-D-glucose to form UDP-4-keto-beta-L-rhamnose and the reduction of UDP-4-keto-beta-L-rhamnose to yield UDP-beta-L-rhamnose. The chain is Trifunctional UDP-glucose 4,6-dehydratase/UDP-4-keto-6-deoxy-D-glucose 3,5-epimerase/UDP-4-keto-L-rhamnose-reductase RHM1 from Arabidopsis thaliana (Mouse-ear cress).